The following is a 97-amino-acid chain: Large ribosomal subunit protein uL23 (97 aa).

This sequence belongs to the universal ribosomal protein uL23 family. As to quaternary structure, part of the 50S ribosomal subunit. Contacts protein L29, and trigger factor when it is bound to the ribosome.

Functionally, one of the early assembly proteins it binds 23S rRNA. One of the proteins that surrounds the polypeptide exit tunnel on the outside of the ribosome. Forms the main docking site for trigger factor binding to the ribosome. This Anaeromyxobacter dehalogenans (strain 2CP-1 / ATCC BAA-258) protein is Large ribosomal subunit protein uL23.